The primary structure comprises 558 residues: Formate--tetrahydrofolate ligase (558 aa).

ATP is bound at residue 67-74; sequence TPAGEGKT.

This sequence belongs to the formate--tetrahydrofolate ligase family.

It carries out the reaction (6S)-5,6,7,8-tetrahydrofolate + formate + ATP = (6R)-10-formyltetrahydrofolate + ADP + phosphate. Its pathway is one-carbon metabolism; tetrahydrofolate interconversion. This chain is Formate--tetrahydrofolate ligase, found in Sphingobium sp. (strain NBRC 103272 / SYK-6).